Consider the following 313-residue polypeptide: D-alanine--D-alanine ligase (313 aa).

Residues 108–308 enclose the ATP-grasp domain; it reads KLVWQQTGVP…YSELVVKVLS (201 aa). Position 138-193 (138-193) interacts with ATP; sequence VAKLGLPLFVKPASEGSSVAVLKVKTADALPAALEEAATHDKIVIVEKSIEGGGEY. Residues Asp262, Glu275, and Asn277 each contribute to the Mg(2+) site.

This sequence belongs to the D-alanine--D-alanine ligase family. Mg(2+) is required as a cofactor. Mn(2+) serves as cofactor.

It is found in the cytoplasm. The catalysed reaction is 2 D-alanine + ATP = D-alanyl-D-alanine + ADP + phosphate + H(+). Its pathway is cell wall biogenesis; peptidoglycan biosynthesis. Functionally, cell wall formation. The protein is D-alanine--D-alanine ligase of Burkholderia cenocepacia (strain ATCC BAA-245 / DSM 16553 / LMG 16656 / NCTC 13227 / J2315 / CF5610) (Burkholderia cepacia (strain J2315)).